The sequence spans 306 residues: Probable zinc metalloprotease VDBG_06923 (306 aa).

Positions 1–28 are cleaved as a signal peptide; the sequence is MNYEAEQPGANDDASGVAVALELARVLA. The Zn(2+) site is built by Asp12 and Glu45. An N-linked (GlcNAc...) asparagine glycan is attached at Asn60. Asp72 is a Zn(2+) binding site. Residues 218 to 306 form the Fibronectin type-III domain; that stretch reads APAKVNNVRV…KSPVTIPFPT (89 aa). 3 N-linked (GlcNAc...) asparagine glycosylation sites follow: Asn228, Asn234, and Asn244.

Belongs to the peptidase M28 family. M28B subfamily. Requires Zn(2+) as cofactor.

It is found in the secreted. The sequence is that of Probable zinc metalloprotease VDBG_06923 from Verticillium alfalfae (strain VaMs.102 / ATCC MYA-4576 / FGSC 10136) (Verticillium wilt of alfalfa).